The sequence spans 161 residues: Transcription elongation factor GreA (161 aa).

A coiled-coil region spans residues Leu-8–Arg-28.

Belongs to the GreA/GreB family.

Necessary for efficient RNA polymerase transcription elongation past template-encoded arresting sites. The arresting sites in DNA have the property of trapping a certain fraction of elongating RNA polymerases that pass through, resulting in locked ternary complexes. Cleavage of the nascent transcript by cleavage factors such as GreA or GreB allows the resumption of elongation from the new 3'terminus. GreA releases sequences of 2 to 3 nucleotides. In Mycoplasma genitalium (strain ATCC 33530 / DSM 19775 / NCTC 10195 / G37) (Mycoplasmoides genitalium), this protein is Transcription elongation factor GreA.